The following is a 345-amino-acid chain: Histidinol-phosphate aminotransferase (345 aa).

An N6-(pyridoxal phosphate)lysine modification is found at Lys206.

It belongs to the class-II pyridoxal-phosphate-dependent aminotransferase family. Histidinol-phosphate aminotransferase subfamily. In terms of assembly, homodimer. Pyridoxal 5'-phosphate is required as a cofactor.

It catalyses the reaction L-histidinol phosphate + 2-oxoglutarate = 3-(imidazol-4-yl)-2-oxopropyl phosphate + L-glutamate. The protein operates within amino-acid biosynthesis; L-histidine biosynthesis; L-histidine from 5-phospho-alpha-D-ribose 1-diphosphate: step 7/9. The sequence is that of Histidinol-phosphate aminotransferase from Bacteroides fragilis (strain ATCC 25285 / DSM 2151 / CCUG 4856 / JCM 11019 / LMG 10263 / NCTC 9343 / Onslow / VPI 2553 / EN-2).